The sequence spans 1110 residues: ATP-dependent DNA helicase MPH1 (1110 aa).

A compositionally biased stretch (polar residues) spans 24–34 (LNEVSDSQTGR). 3 disordered regions span residues 24-165 (LNEV…TNGK), 178-212 (FEEE…PVTN), and 236-305 (TETA…PTHH). 2 stretches are compositionally biased toward basic and acidic residues: residues 42 to 57 (NSHE…REIE) and 178 to 188 (FEEEQSARGDA). The segment covering 189–199 (EMLDDSIEEPG) has biased composition (acidic residues). Composition is skewed to polar residues over residues 246–273 (ISSQ…QTTL) and 287–300 (QPAT…SRNE). The Helicase ATP-binding domain maps to 331-499 (IAHRALFHNL…EVIDGLSISR (169 aa)). 344 to 351 (LPTGLGKT) lines the ATP pocket. Positions 447–450 (DEAH) match the DEAH box motif. Residues 675-846 (ILNHFLDAGG…RFTFHTDKSS (172 aa)) enclose the Helicase C-terminal domain. 3 disordered regions span residues 867–937 (ENSQ…PDLG), 1013–1055 (VGDP…RCGT), and 1069–1110 (NLAW…DVFE). Over residues 879-890 (RSRAPKRPPKKF) the composition is skewed to basic residues. Basic and acidic residues-rich tracts occupy residues 891–900 (HMPDGVEKGF), 1041–1055 (QSRE…RCGT), and 1077–1093 (EAPR…DQKP).

Belongs to the DEAD box helicase family. DEAH subfamily. FANCM sub-subfamily. As to quaternary structure, interacts with the MHF histone-fold complex to form the FANCM-MHF complex.

The protein resides in the nucleus. It catalyses the reaction ATP + H2O = ADP + phosphate + H(+). Its function is as follows. ATP-dependent DNA helicase involved in DNA damage repair by homologous recombination and in genome maintenance. Capable of unwinding D-loops. Plays a role in limiting crossover recombinants during mitotic DNA double-strand break (DSB) repair. Component of a FANCM-MHF complex which promotes gene conversion at blocked replication forks, probably by reversal of the stalled fork. The protein is ATP-dependent DNA helicase MPH1 of Coccidioides immitis (strain RS) (Valley fever fungus).